A 189-amino-acid chain; its full sequence is Elongation factor P (189 aa).

This sequence belongs to the elongation factor P family.

The protein localises to the cytoplasm. Its pathway is protein biosynthesis; polypeptide chain elongation. In terms of biological role, involved in peptide bond synthesis. Stimulates efficient translation and peptide-bond synthesis on native or reconstituted 70S ribosomes in vitro. Probably functions indirectly by altering the affinity of the ribosome for aminoacyl-tRNA, thus increasing their reactivity as acceptors for peptidyl transferase. This is Elongation factor P from Rhizobium etli (strain ATCC 51251 / DSM 11541 / JCM 21823 / NBRC 15573 / CFN 42).